Here is a 500-residue protein sequence, read N- to C-terminus: Serine/threonine protein phosphatase 2A 57 kDa regulatory subunit B' kappa isoform (500 aa).

The tract at residues 1–53 is disordered; that stretch reads MFKQFLSKLPRKSSKSDSGELNRSSSGPVSSPVQRSGTSGGGSGPVRSNSGKR. Over residues 21–37 the composition is skewed to polar residues; sequence LNRSSSGPVSSPVQRSG.

The protein belongs to the phosphatase 2A regulatory subunit B56 family. PP2A consists of a common heteromeric enzyme, composed of a catalytic subunit (subunits C), a constant regulatory subunit (subunit A), and a variety of regulatory subunits such as subunits B (the R2/B/PR55/B55, R3/B''/PR72/PR130/PR59 and R5/B'/B56 families).

It is found in the cytoplasm. In terms of biological role, the B regulatory subunit may modulate substrate selectivity and catalytic activity, and may also direct the localization of the catalytic enzyme to a particular subcellular compartment. The protein is Serine/threonine protein phosphatase 2A 57 kDa regulatory subunit B' kappa isoform (B'KAPPA) of Arabidopsis thaliana (Mouse-ear cress).